A 274-amino-acid chain; its full sequence is 2,3,4,5-tetrahydropyridine-2,6-dicarboxylate N-succinyltransferase (274 aa).

Substrate contacts are provided by R104 and D141.

This sequence belongs to the transferase hexapeptide repeat family. Homotrimer.

It localises to the cytoplasm. The catalysed reaction is (S)-2,3,4,5-tetrahydrodipicolinate + succinyl-CoA + H2O = (S)-2-succinylamino-6-oxoheptanedioate + CoA. It participates in amino-acid biosynthesis; L-lysine biosynthesis via DAP pathway; LL-2,6-diaminopimelate from (S)-tetrahydrodipicolinate (succinylase route): step 1/3. This is 2,3,4,5-tetrahydropyridine-2,6-dicarboxylate N-succinyltransferase from Citrobacter koseri (strain ATCC BAA-895 / CDC 4225-83 / SGSC4696).